The sequence spans 444 residues: Methylenetetrahydrofolate--tRNA-(uracil-5-)-methyltransferase TrmFO (444 aa).

10–15 (GAGLAG) is an FAD binding site.

It belongs to the MnmG family. TrmFO subfamily. FAD serves as cofactor.

It localises to the cytoplasm. The enzyme catalyses uridine(54) in tRNA + (6R)-5,10-methylene-5,6,7,8-tetrahydrofolate + NADH + H(+) = 5-methyluridine(54) in tRNA + (6S)-5,6,7,8-tetrahydrofolate + NAD(+). It carries out the reaction uridine(54) in tRNA + (6R)-5,10-methylene-5,6,7,8-tetrahydrofolate + NADPH + H(+) = 5-methyluridine(54) in tRNA + (6S)-5,6,7,8-tetrahydrofolate + NADP(+). Catalyzes the folate-dependent formation of 5-methyl-uridine at position 54 (M-5-U54) in all tRNAs. This is Methylenetetrahydrofolate--tRNA-(uracil-5-)-methyltransferase TrmFO from Streptococcus pneumoniae (strain Taiwan19F-14).